The sequence spans 550 residues: Kinase suppressor of Ras B (550 aa).

2 stretches are compositionally biased toward low complexity: residues 21 to 56 (SFSSWRRSSTSGSISQSSRTTSKTTTSSSVTSSNPI) and 63 to 75 (ATSSSSVLPSTSS). Positions 21-87 (SFSSWRRSST…PPPASAPPRI (67 aa)) are disordered. The segment at 90 to 145 (YHKMVPSKSKFRQCDVCEHIFIFDFVRKQHLDDVYACNVCGIRVHKGCLDRVKNDC) adopts a Phorbol-ester/DAG-type zinc-finger fold. The disordered stretch occupies residues 172 to 196 (TTASISKSLTTSPTCSTSTTMSPAG). The segment covering 177 to 193 (SKSLTTSPTCSTSTTMS) has biased composition (low complexity). Residues 248–528 (VDVMTKIGDG…FQQIVKRITV (281 aa)) form the Protein kinase domain. The interval 530-550 (MPRKESNKQKRRSTAHENPLF) is disordered.

The protein belongs to the protein kinase superfamily. TKL Ser/Thr protein kinase family. In terms of assembly, interacts with ndk-1.

Its function is as follows. Probable inactive protein kinase which positively regulates Ras-mediated signaling probably acting at the level of let-60/ras or/and lin-45/raf. In the germline, regulates meiotic progression during oogenesis and mpk-1 (isoform b) phosphorylation. Plays a role in meiotic recombination events. Functions redundantly with ksr-1 in the Ras-mediated regulation of larval survival, the development of excretory canal, in determining vulval precursor cell fate during vulval induction and in mpk-1 phosphorylation in somatic cells. This is Kinase suppressor of Ras B from Caenorhabditis elegans.